A 346-amino-acid chain; its full sequence is Ribosomal RNA small subunit methyltransferase H (346 aa).

Residues 46–48, D63, F90, D113, and Q120 contribute to the S-adenosyl-L-methionine site; that span reads GGY. The disordered stretch occupies residues 270–346; it reads GGSAGSRHMP…LPETNELARS (77 aa).

It belongs to the methyltransferase superfamily. RsmH family.

The protein resides in the cytoplasm. It catalyses the reaction cytidine(1402) in 16S rRNA + S-adenosyl-L-methionine = N(4)-methylcytidine(1402) in 16S rRNA + S-adenosyl-L-homocysteine + H(+). Functionally, specifically methylates the N4 position of cytidine in position 1402 (C1402) of 16S rRNA. In Brucella suis (strain ATCC 23445 / NCTC 10510), this protein is Ribosomal RNA small subunit methyltransferase H.